Reading from the N-terminus, the 481-residue chain is Protein hedgehog (481 aa).

A signal peptide spans 1–19; sequence MDNQAVSALWSCASATCLS. The propeptide occupies 20–90; that stretch reads LDAKRHSIEP…LALNFRHAHS (71 aa). Residues 26 to 56 form a disordered region; that stretch reads SIEPNPDGQASPDVNNNNNNHNKSTTTVDAH. Cys91 carries the N-palmitoyl cysteine lipid modification. Residues Glu155, Glu156, Asp161, Thr191, Glu192, Asp195, and Asp197 each contribute to the Ca(2+) site. A lipid anchor (Cholesterol glycine ester) is attached at Gly264.

Belongs to the hedgehog family. In terms of assembly, interacts with shf. The C-terminal part of the hedgehog protein precursor displays an autoproteolysis activity that results in the cleavage of the full-length protein into two parts (N-product and C-product). In addition, the C-terminal part displays a cholesterol transferase activity that results by the covalent attachment of a cholesterol moiety to the C-terminal of the newly generated N-product. The N-product is the active species in both local and long-range signaling, whereas the C-product has no signaling activity. In terms of processing, cholesterylation is required for N-product targeting to lipid rafts and multimerization. Post-translationally, N-palmitoylation by Rasp of the hedgehog N-product, within the secretory pathway, is required for the embryonic and larval patterning activities of the hedgehog signal.

The protein localises to the nucleus. It localises to the cytoplasm. Its subcellular location is the cell membrane. It carries out the reaction glycyl-L-cysteinyl-[protein] + cholesterol + H(+) = [protein]-C-terminal glycyl cholesterol ester + N-terminal L-cysteinyl-[protein]. The C-terminal part of the hedgehog protein precursor displays an autoproteolysis activity that results in the cleavage of the full-length protein into two parts (N-product and C-product). In addition, the C-terminal part displays a cholesterol transferase activity that results by the covalent attachment of a cholesterol moiety to the C-terminal of the newly generated N-product. Once cleaved, the C-product has no signaling activity and diffuses from the cell. Functionally, the dually lipidated hedgehog protein N-product is a morphogen which is essential for a variety of patterning events during development. Establishes the anterior-posterior axis of the embryonic segments and patterns the larval imaginal disks. Binds to the patched (ptc) receptor, which functions in association with smoothened (smo), to activate the transcription of target genes wingless (wg), decapentaplegic (dpp) and ptc. In the absence of hh, ptc represses the constitutive signaling activity of smo through fused (fu). Essential component of a signaling pathway which regulates the Duox-dependent gut immune response to bacterial uracil; required to activate Cad99C-dependent endosome formation, norpA-dependent Ca2+ mobilization and p38 MAPK, which are essential steps in the Duox-dependent production of reactive oxygen species (ROS) in response to intestinal bacterial infection. During photoreceptor differentiation, it up-regulates transcription of Ubr3, which in turn promotes the hh-signaling pathway by mediating the ubiquitination and degradation of cos. The sequence is that of Protein hedgehog from Drosophila hydei (Fruit fly).